The sequence spans 477 residues: Bifunctional protein HldE (477 aa).

Residues 1 to 318 form a ribokinase region; it reads MKVTLPEFER…ENAVRGRADT (318 aa). Residue Lys-179 is modified to N6-acetyllysine. 195–198 serves as a coordination point for ATP; it reads NLSE. Residue Asp-264 is part of the active site. The interval 344–477 is cytidylyltransferase; it reads MTNGVFDILH…IKKIQQDKKG (134 aa).

The protein in the N-terminal section; belongs to the carbohydrate kinase PfkB family. This sequence in the C-terminal section; belongs to the cytidylyltransferase family. In terms of assembly, homodimer.

It catalyses the reaction D-glycero-beta-D-manno-heptose 7-phosphate + ATP = D-glycero-beta-D-manno-heptose 1,7-bisphosphate + ADP + H(+). It carries out the reaction D-glycero-beta-D-manno-heptose 1-phosphate + ATP + H(+) = ADP-D-glycero-beta-D-manno-heptose + diphosphate. Its pathway is nucleotide-sugar biosynthesis; ADP-L-glycero-beta-D-manno-heptose biosynthesis; ADP-L-glycero-beta-D-manno-heptose from D-glycero-beta-D-manno-heptose 7-phosphate: step 1/4. The protein operates within nucleotide-sugar biosynthesis; ADP-L-glycero-beta-D-manno-heptose biosynthesis; ADP-L-glycero-beta-D-manno-heptose from D-glycero-beta-D-manno-heptose 7-phosphate: step 3/4. Catalyzes the phosphorylation of D-glycero-D-manno-heptose 7-phosphate at the C-1 position to selectively form D-glycero-beta-D-manno-heptose-1,7-bisphosphate. Functionally, catalyzes the ADP transfer from ATP to D-glycero-beta-D-manno-heptose 1-phosphate, yielding ADP-D-glycero-beta-D-manno-heptose. This is Bifunctional protein HldE from Escherichia coli (strain 55989 / EAEC).